Here is a 314-residue protein sequence, read N- to C-terminus: Aspartate carbamoyltransferase catalytic subunit (314 aa).

Carbamoyl phosphate is bound by residues Arg58 and Thr59. Residue Lys86 participates in L-aspartate binding. 3 residues coordinate carbamoyl phosphate: Arg108, His136, and Gln139. Arg169 and Arg223 together coordinate L-aspartate. The carbamoyl phosphate site is built by Gly264 and Pro265.

Belongs to the aspartate/ornithine carbamoyltransferase superfamily. ATCase family. As to quaternary structure, heterododecamer (2C3:3R2) of six catalytic PyrB chains organized as two trimers (C3), and six regulatory PyrI chains organized as three dimers (R2).

It carries out the reaction carbamoyl phosphate + L-aspartate = N-carbamoyl-L-aspartate + phosphate + H(+). It functions in the pathway pyrimidine metabolism; UMP biosynthesis via de novo pathway; (S)-dihydroorotate from bicarbonate: step 2/3. Its function is as follows. Catalyzes the condensation of carbamoyl phosphate and aspartate to form carbamoyl aspartate and inorganic phosphate, the committed step in the de novo pyrimidine nucleotide biosynthesis pathway. This Opitutus terrae (strain DSM 11246 / JCM 15787 / PB90-1) protein is Aspartate carbamoyltransferase catalytic subunit.